The chain runs to 165 residues: Pro-MCH (165 aa).

A signal peptide spans 1–21 (MAKMNLSSYILILTFSLFSQG). I143 is subject to Isoleucine amide. An intrachain disulfide couples C153 to C162.

Belongs to the melanin-concentrating hormone family. Post-translationally, differentially processed in the brain and in peripheral organs producing two neuropeptides; NEI and MCH. A third peptide, NGE, may also be produced. Preferential processing in neurons by prohormone convertase 2 (PC2) generates NEI. MCH is generated in neurons of the lateral hypothalmic area by several prohormone convertases including PC1/3, PC2 and PC5/6. Predominantly expressed in lateral hypothalamus, also detected in pallidum, neocortex and cerebellum. Also found in thymus, brown adipose tissue, duodenum and testis (spermatogonia, early spermatocytes and Sertoli cells). No expression in peripheral blood. In brain exclusively mature MCH and NEI peptides are present. In peripheral tissues a large product, encompassing the NEI and MCH domains of the precursor, is found predominantly.

The protein localises to the secreted. MCH may act as a neurotransmitter or neuromodulator in a broad array of neuronal functions directed toward the regulation of goal-directed behavior, such as food intake, and general arousal. May also have a role in spermatocyte differentiation. In Homo sapiens (Human), this protein is Pro-MCH (PMCH).